The following is a 72-amino-acid chain: N-alpha-acetyltransferase 38, NatC auxiliary subunit (72 aa).

The Sm domain occupies 3 to 72 (NGEILLTSWL…KHIKSFSVRA (70 aa)).

As to quaternary structure, component of the N-terminal acetyltransferase C (NatC) complex, composed of the catalytic subunit Naa30, a large auxiliary subunit Naa35 and a small auxiliary subunit Naa38.

The protein localises to the endoplasmic reticulum. Its function is as follows. Component of the NatC N-terminal acetyltransferase, which associates with the ribosome to acetylate nascent protein chains in a cotranslational manner. NatC acetylates protein N-termini starting with methionine, followed by a hydrophobic or amphipathic amino acid, with amino acids at positions 3 and 4 also contributing to NatC recognition. The first 4 amino acids of cognate substrates are recognized at the Naa30-Naa35 interface. NatC-dependent acetylation targets various substrate proteins to specific subcellular sites. The polypeptide is N-alpha-acetyltransferase 38, NatC auxiliary subunit (naa38) (Schizosaccharomyces pombe (strain 972 / ATCC 24843) (Fission yeast)).